A 113-amino-acid chain; its full sequence is Large ribosomal subunit protein uL22 (113 aa).

It belongs to the universal ribosomal protein uL22 family. Part of the 50S ribosomal subunit.

In terms of biological role, this protein binds specifically to 23S rRNA; its binding is stimulated by other ribosomal proteins, e.g. L4, L17, and L20. It is important during the early stages of 50S assembly. It makes multiple contacts with different domains of the 23S rRNA in the assembled 50S subunit and ribosome. Functionally, the globular domain of the protein is located near the polypeptide exit tunnel on the outside of the subunit, while an extended beta-hairpin is found that lines the wall of the exit tunnel in the center of the 70S ribosome. This chain is Large ribosomal subunit protein uL22, found in Bacillus cereus (strain ATCC 10987 / NRS 248).